Consider the following 348-residue polypeptide: Protein RecA (348 aa).

Residue 66–73 (GPESSGKT) coordinates ATP.

The protein belongs to the RecA family.

Its subcellular location is the cytoplasm. Functionally, can catalyze the hydrolysis of ATP in the presence of single-stranded DNA, the ATP-dependent uptake of single-stranded DNA by duplex DNA, and the ATP-dependent hybridization of homologous single-stranded DNAs. It interacts with LexA causing its activation and leading to its autocatalytic cleavage. The sequence is that of Protein RecA from Neisseria meningitidis serogroup C / serotype 2a (strain ATCC 700532 / DSM 15464 / FAM18).